The primary structure comprises 145 residues: Ribonuclease H (145 aa).

Residues 1–141 (MQEVIIYSDG…ADALANRGVA (141 aa)) form the RNase H type-1 domain. 4 residues coordinate Mg(2+): Asp9, Glu47, Asp69, and Asp133.

This sequence belongs to the RNase H family. Monomer. The cofactor is Mg(2+).

The protein resides in the cytoplasm. The enzyme catalyses Endonucleolytic cleavage to 5'-phosphomonoester.. Functionally, endonuclease that specifically degrades the RNA of RNA-DNA hybrids. This is Ribonuclease H from Cupriavidus pinatubonensis (strain JMP 134 / LMG 1197) (Cupriavidus necator (strain JMP 134)).